The primary structure comprises 378 residues: Putative dioxygenase VC_1345 (378 aa).

Residues His-288, Asp-294, and His-324 each contribute to the Fe cation site.

The protein belongs to the homogentisate dioxygenase family. Requires Fe cation as cofactor.

This Vibrio cholerae serotype O1 (strain ATCC 39315 / El Tor Inaba N16961) protein is Putative dioxygenase VC_1345.